A 369-amino-acid chain; its full sequence is UDP-3-O-acylglucosamine N-acyltransferase (369 aa).

The Proton acceptor role is filled by histidine 252. The tract at residues glutamate 348 to serine 369 is disordered.

The protein belongs to the transferase hexapeptide repeat family. LpxD subfamily. In terms of assembly, homotrimer.

It carries out the reaction a UDP-3-O-[(3R)-3-hydroxyacyl]-alpha-D-glucosamine + a (3R)-hydroxyacyl-[ACP] = a UDP-2-N,3-O-bis[(3R)-3-hydroxyacyl]-alpha-D-glucosamine + holo-[ACP] + H(+). It participates in bacterial outer membrane biogenesis; LPS lipid A biosynthesis. Its function is as follows. Catalyzes the N-acylation of UDP-3-O-acylglucosamine using 3-hydroxyacyl-ACP as the acyl donor. Is involved in the biosynthesis of lipid A, a phosphorylated glycolipid that anchors the lipopolysaccharide to the outer membrane of the cell. The chain is UDP-3-O-acylglucosamine N-acyltransferase from Cupriavidus metallidurans (strain ATCC 43123 / DSM 2839 / NBRC 102507 / CH34) (Ralstonia metallidurans).